We begin with the raw amino-acid sequence, 316 residues long: Nod factor export ATP-binding protein I (316 aa).

The region spanning 18–248 is the ABC transporter domain; that stretch reads IDFSDVSKTY…LIGCEVIEIY (231 aa). An ATP-binding site is contributed by 50–57; that stretch reads GPNGAGKS.

Belongs to the ABC transporter superfamily. Lipooligosaccharide exporter (TC 3.A.1.102) family. The complex is composed of two ATP-binding proteins (NodI) and two transmembrane proteins (NodJ).

The protein localises to the cell inner membrane. Its function is as follows. Part of the ABC transporter complex NodIJ involved in the export of the nodulation factors (Nod factors), the bacterial signal molecules that induce symbiosis and subsequent nodulation induction. Nod factors are LCO (lipo-chitin oligosaccharide), a modified beta-1,4-linked N-acetylglucosamine oligosaccharide. This subunit is responsible for energy coupling to the transport system. The chain is Nod factor export ATP-binding protein I from Rhizobium etli (strain ATCC 51251 / DSM 11541 / JCM 21823 / NBRC 15573 / CFN 42).